The sequence spans 212 residues: Large ribosomal subunit protein uL3 (212 aa).

Residues 119–146 are disordered; the sequence is YQGNIKRWGQSRGPETHGSRYHRIPGSM.

The protein belongs to the universal ribosomal protein uL3 family. In terms of assembly, part of the 50S ribosomal subunit. Forms a cluster with proteins L14 and L19.

Its function is as follows. One of the primary rRNA binding proteins, it binds directly near the 3'-end of the 23S rRNA, where it nucleates assembly of the 50S subunit. This Lactobacillus helveticus (strain DPC 4571) protein is Large ribosomal subunit protein uL3.